A 74-amino-acid chain; its full sequence is Anaphase-promoting complex subunit 13 (74 aa).

Residues 33–56 (LSELPEPEQDNGGTTESVKEQEMK) form a disordered region.

Belongs to the APC13 family. As to quaternary structure, the mammalian APC/C is composed at least of 14 distinct subunits ANAPC1, ANAPC2, CDC27/APC3, ANAPC4, ANAPC5, CDC16/APC6, ANAPC7, CDC23/APC8, ANAPC10, ANAPC11, CDC26/APC12, ANAPC13, ANAPC15 and ANAPC16 that assemble into a complex of at least 19 chains with a combined molecular mass of around 1.2 MDa; APC/C interacts with FZR1 and FBXO5.

It is found in the nucleus. Its pathway is protein modification; protein ubiquitination. Component of the anaphase promoting complex/cyclosome (APC/C), a cell cycle-regulated E3 ubiquitin ligase that controls progression through mitosis and the G1 phase of the cell cycle. The APC/C complex acts by mediating ubiquitination and subsequent degradation of target proteins: it mainly mediates the formation of 'Lys-11'-linked polyubiquitin chains and, to a lower extent, the formation of 'Lys-48'- and 'Lys-63'-linked polyubiquitin chains. The APC/C complex catalyzes assembly of branched 'Lys-11'-/'Lys-48'-linked branched ubiquitin chains on target proteins. The chain is Anaphase-promoting complex subunit 13 (Anapc13) from Mus musculus (Mouse).